The primary structure comprises 393 residues: S-adenosylmethionine synthase 3 (393 aa).

Glu-9 provides a ligand contact to Mg(2+). His-15 is an ATP binding site. A K(+)-binding site is contributed by Glu-43. Positions 56 and 99 each coordinate L-methionine. ATP-binding positions include 167-169 (NGK), 235-238 (SGRF), Asp-246, 252-253 (RK), Ala-269, Lys-273, and Lys-277. Asp-246 contributes to the L-methionine binding site. Lys-277 is an L-methionine binding site.

This sequence belongs to the AdoMet synthase family. Homotetramer. Mn(2+) serves as cofactor. Mg(2+) is required as a cofactor. The cofactor is Co(2+). It depends on K(+) as a cofactor. In terms of tissue distribution, mostly expressed in flowers, seedpods and roots, and, to a lower extent, in stems and leaves.

The protein resides in the cytoplasm. The catalysed reaction is L-methionine + ATP + H2O = S-adenosyl-L-methionine + phosphate + diphosphate. Its pathway is amino-acid biosynthesis; S-adenosyl-L-methionine biosynthesis; S-adenosyl-L-methionine from L-methionine: step 1/1. Catalyzes the formation of S-adenosylmethionine from methionine and ATP. The reaction comprises two steps that are both catalyzed by the same enzyme: formation of S-adenosylmethionine (AdoMet) and triphosphate, and subsequent hydrolysis of the triphosphate. This is S-adenosylmethionine synthase 3 (MSAMS3) from Brassica juncea (Indian mustard).